We begin with the raw amino-acid sequence, 225 residues long: Thymidylate kinase (225 aa).

Gly-10 to Thr-17 is an ATP binding site.

The protein belongs to the thymidylate kinase family.

It catalyses the reaction dTMP + ATP = dTDP + ADP. Functionally, phosphorylation of dTMP to form dTDP in both de novo and salvage pathways of dTTP synthesis. This Trichodesmium erythraeum (strain IMS101) protein is Thymidylate kinase.